The chain runs to 169 residues: Endoribonuclease YbeY (169 aa).

Residues histidine 135, histidine 139, and histidine 145 each coordinate Zn(2+).

It belongs to the endoribonuclease YbeY family. Requires Zn(2+) as cofactor.

The protein resides in the cytoplasm. In terms of biological role, single strand-specific metallo-endoribonuclease involved in late-stage 70S ribosome quality control and in maturation of the 3' terminus of the 16S rRNA. This Lachnospira eligens (strain ATCC 27750 / DSM 3376 / VPI C15-48 / C15-B4) (Eubacterium eligens) protein is Endoribonuclease YbeY.